The sequence spans 301 residues: Multifunctional dioxygenase prhA (301 aa).

Fe cation contacts are provided by His130, Asp132, and His214.

It belongs to the PhyH family. Homodimer. Requires Fe cation as cofactor.

The catalysed reaction is preaustinoid A1 + 2-oxoglutarate + O2 = berkeleyone B + succinate + CO2 + H2O. It catalyses the reaction berkeleyone B + 2-oxoglutarate + O2 = berkeleydione + succinate + CO2 + H2O. It carries out the reaction preaustinoid A + 2 2-oxoglutarate + 2 O2 = berkeleytrione + 2 succinate + 2 CO2 + H2O. Its pathway is secondary metabolite biosynthesis; terpenoid biosynthesis. Multifunctional dioxygenase; part of the gene cluster that mediates the biosynthesis of paraherquonin, a meroterpenoid with a unique, highly congested hexacyclic molecular architecture. The first step of the pathway is the synthesis of 3,5-dimethylorsellinic acid (DMOA) by the polyketide synthase prhL. Synthesis of DMOA is followed by farnesylation by the prenyltransferase prhE, methylesterification by the methyl-transferase prhM, epoxidation of the prenyl chain by the flavin-dependent monooxygenase prhF, and cyclization of the farnesyl moiety by the terpene cyclase prhH, to yield the tetracyclic intermediate, protoaustinoid A. The short chain dehydrogenase prhI then oxidizes the C-3 alcohol group of the terpene cyclase product to transform protoaustinoid A into protoaustinoid B. The FAD-binding monooxygenase prhJ catalyzes the oxidation of protoaustinoid B into preaustinoid A which is further oxidized into preaustinoid A1 by FAD-binding monooxygenase phrK. Finally, prhA leads to berkeleydione via the berkeleyone B intermediate. PrhA is a multifunctional dioxygenase that first desaturates at C5-C6 to form berkeleyone B, followed by rearrangement of the A/B-ring to form the cycloheptadiene moiety in berkeleydione. Berkeleydione serves as the key intermediate for the biosynthesis of paraherquonin as well as many other meroterpenoids. The cytochrome P450 monooxygenases prhB, prhD, and prhN, as well as the isomerase prhC, are probably involved in the late stage of paraherquonin biosynthesis, after the production of berkeleydione. Especially prhC might be a multifunctional enzyme that catalyzes the D-ring expansion via intramolecular methoxy rearrangement, as well as the hydrolysis of the expanded D-ring. This Penicillium brasilianum protein is Multifunctional dioxygenase prhA.